A 256-amino-acid chain; its full sequence is Trypsin alpha (256 aa).

Residues 1–22 form the signal peptide; it reads MLKIVILLSAVVCALGGTVPEG. Residues 23-30 constitute a propeptide, activation peptide; the sequence is LLPQLDGR. One can recognise a Peptidase S1 domain in the interval 31 to 254; the sequence is IVGGSATTIS…LRSWVISTAN (224 aa). Cysteine 56 and cysteine 72 form a disulfide bridge. Catalysis depends on charge relay system residues histidine 71 and aspartate 116. Disulfide bonds link cysteine 180-cysteine 197 and cysteine 206-cysteine 230. Residue serine 210 is the Charge relay system of the active site.

The protein belongs to the peptidase S1 family.

It localises to the secreted. Its subcellular location is the extracellular space. The enzyme catalyses Preferential cleavage: Arg-|-Xaa, Lys-|-Xaa.. The sequence is that of Trypsin alpha (alphaTry) from Drosophila erecta (Fruit fly).